A 263-amino-acid chain; its full sequence is MKWMCSICCAAVLLAGGAAQAEAVPNEPINWGFKRSVNHQPPDAGKQLNSLIEKYDAFYLGNTKEKTIYLTFDNGYENGYTPKVLDVLKKHRVTGTFFVTGHFVKDQPQLIKRMSDEGHIIGNHSFHHPDLTTKTADQIQDELDSVNEEVYKITGKQDNLYLRPPRGVFSEYVLKETKRLGYQTVFWSVAFVDWKINNQKGKKYAYDHMIKQAHPGAIYLLHTVSRDNAEALDDAITDLKKQGYTFKSIDDLMFEKEMRLPSL.

Positions 1–23 are cleaved as a signal peptide; sequence MKWMCSICCAAVLLAGGAAQAEA. Residues 66-247 form the NodB homology domain; it reads KTIYLTFDNG…DLKKQGYTFK (182 aa). The active-site Proton acceptor is the aspartate 73. Residues histidine 124 and histidine 128 each contribute to the a divalent metal cation site. Residue histidine 222 is the Proton donor of the active site.

The protein belongs to the polysaccharide deacetylase family.

Functionally, catalyzes the deacetylation of N-acetylmuramic acid (MurNAc) residues in glycan strands of peptidoglycan, leading to the formation of muramic delta-lactam residues in spore cortex, after transpeptidation of deacetylated muramic acid residues. PdaA probably carries out both deacetylation and lactam ring formation and requires the product of CwlD activity on peptidoglycan as a substrate. Is required for germination. Cannot use chitin oligomer (hexa-N-acetylchitohexaose) as a substrate. This Bacillus subtilis (strain 168) protein is Peptidoglycan-N-acetylmuramic acid deacetylase PdaA (pdaA).